Consider the following 396-residue polypeptide: Probable 20S rRNA accumulation protein 4 (396 aa).

This sequence belongs to the TSR4 family.

Its subcellular location is the cytoplasm. It localises to the nucleus. The protein resides in the nucleolus. In terms of biological role, required for processing of the 20S pre-rRNA at site D to generate mature 18S rRNA. In Schizosaccharomyces pombe (strain 972 / ATCC 24843) (Fission yeast), this protein is Probable 20S rRNA accumulation protein 4.